The chain runs to 761 residues: MAEIMTALIICEKPSVAKKIANALGKAKKKSIDGVPYYELERDGKKIIVASAVGHLFTLVEKENKEFGFYPVFDIKWVPASVDKGKEYVNKYIKALKKLSKDADEFYIATDWDIEGELIGYHALKYCCGREKAKRMRFSSLTKKEIVRAFENPDEIDYGLVDAGESRHILDWYFGINLSRALMNAIRAVNRWKTMSVGRVQGPALAFLTERELEIKKFIPKPYWVIEALLKDNLKAIHEKEKFWNEKEAKNVYEKIKDEKSAKVVEIKKTKRKLKPLPPFDLGTLQREAYSYFKISPKETQEIAQKLYENALISYPRTSSQKLPKDRKYLEDILNIIKNHPVYGKWAERILKENLKPVEGKKEDPAHPAIHIVDIPKEELSEKEKEIYDLIARRTLAAFWDNAEREYLNVKIDIKGEKFKLSGSRTVKEGWHEIYYFPKFDEIELPPLKKNDIIKVEKITITRKETQPPKRYTVASIIKELEKRGLGTKATRAEIIDKLIKRGYVIDDGSLKVTDLGISVIETLKRFCPEIIDEKMTRDLEEKLEKIQFRKIKKDDVLDEAEKRLRKILEEFKKKEEDIGIYLIKNLDATNKKAKIVGKCPKCGGDLILIRHKKGRFVGCSNYPECDVKYSLPDKGRIKIPNKVCDACKSPILKIGDREICINPECPLKQVEVKEEDRICPKCGAKLILKKGVYGAFYGCSNYPKCKYTEPINKKEVVGKCPKCGGDLVVREGKFGKFVGCSNYPKCRYTEKLKLNEKEEK.

Positions 6–143 constitute a Toprim domain; the sequence is TALIICEKPS…KRMRFSSLTK (138 aa). Residues glutamate 12 and aspartate 111 each contribute to the Mg(2+) site. One can recognise a Topo IA-type catalytic domain in the interval 157-569; it reads DYGLVDAGES…EAEKRLRKIL (413 aa). The tract at residues 196-201 is interaction with DNA; that stretch reads SVGRVQ. The active-site O-(5'-phospho-DNA)-tyrosine intermediate is tyrosine 315. 3 C4-type zinc fingers span residues 600–626, 680–706, and 721–747; these read CPKC…YPEC and CPKC…YPKC.

This sequence belongs to the type IA topoisomerase family. Monomer. Mg(2+) serves as cofactor.

It catalyses the reaction ATP-independent breakage of single-stranded DNA, followed by passage and rejoining.. Its function is as follows. Releases the supercoiling and torsional tension of DNA, which is introduced during the DNA replication and transcription, by transiently cleaving and rejoining one strand of the DNA duplex. Introduces a single-strand break via transesterification at a target site in duplex DNA. The scissile phosphodiester is attacked by the catalytic tyrosine of the enzyme, resulting in the formation of a DNA-(5'-phosphotyrosyl)-enzyme intermediate and the expulsion of a 3'-OH DNA strand. The free DNA strand then undergoes passage around the unbroken strand, thus removing DNA supercoils. Finally, in the religation step, the DNA 3'-OH attacks the covalent intermediate to expel the active-site tyrosine and restore the DNA phosphodiester backbone. The polypeptide is DNA topoisomerase 1 (Methanocaldococcus jannaschii (strain ATCC 43067 / DSM 2661 / JAL-1 / JCM 10045 / NBRC 100440) (Methanococcus jannaschii)).